A 267-amino-acid polypeptide reads, in one-letter code: Small ribosomal subunit protein uS2 (267 aa).

The segment at 224 to 267 (GRQGEDQVDEKTFEGQKSEAAEGDKKTADNSMEDIVNAVEGDNK) is disordered. Positions 225-251 (RQGEDQVDEKTFEGQKSEAAEGDKKTA) are enriched in basic and acidic residues.

The protein belongs to the universal ribosomal protein uS2 family.

The chain is Small ribosomal subunit protein uS2 from Levilactobacillus brevis (strain ATCC 367 / BCRC 12310 / CIP 105137 / JCM 1170 / LMG 11437 / NCIMB 947 / NCTC 947) (Lactobacillus brevis).